We begin with the raw amino-acid sequence, 109 residues long: Cytochrome c6 (109 aa).

An N-terminal signal peptide occupies residues 1–25 (MFKNIIIVVAVTLCALFTNEHVVYS). Residues Cys39, Cys42, His43, and Met83 each contribute to the heme c site.

Belongs to the cytochrome c family. PetJ subfamily. Monomer. In terms of processing, binds 1 heme c group covalently per subunit.

It is found in the plastid. It localises to the chloroplast thylakoid lumen. Functions as an electron carrier between membrane-bound cytochrome b6-f and photosystem I in oxygenic photosynthesis. The sequence is that of Cytochrome c6 (petJ) from Cyanidium caldarium (Red alga).